The following is a 255-amino-acid chain: 5-oxoprolinase subunit A (255 aa).

Belongs to the LamB/PxpA family. Forms a complex composed of PxpA, PxpB and PxpC.

The enzyme catalyses 5-oxo-L-proline + ATP + 2 H2O = L-glutamate + ADP + phosphate + H(+). In terms of biological role, catalyzes the cleavage of 5-oxoproline to form L-glutamate coupled to the hydrolysis of ATP to ADP and inorganic phosphate. In Corynebacterium efficiens (strain DSM 44549 / YS-314 / AJ 12310 / JCM 11189 / NBRC 100395), this protein is 5-oxoprolinase subunit A.